The following is a 379-amino-acid chain: Protein RecA (379 aa).

79–86 (GPESSGKT) provides a ligand contact to ATP.

This sequence belongs to the RecA family.

Its subcellular location is the cytoplasm. Can catalyze the hydrolysis of ATP in the presence of single-stranded DNA, the ATP-dependent uptake of single-stranded DNA by duplex DNA, and the ATP-dependent hybridization of homologous single-stranded DNAs. It interacts with LexA causing its activation and leading to its autocatalytic cleavage. This Streptococcus uberis (strain ATCC BAA-854 / 0140J) protein is Protein RecA.